Here is a 242-residue protein sequence, read N- to C-terminus: Succinyl-CoA:3-ketoacid coenzyme A transferase subunit A (242 aa).

33-39 (GGFGLCG) lines the CoA pocket.

It belongs to the 3-oxoacid CoA-transferase subunit A family. In terms of assembly, heterodimer of a subunit A and a subunit B.

The catalysed reaction is a 3-oxo acid + succinyl-CoA = a 3-oxoacyl-CoA + succinate. Its pathway is bacterial outer membrane biogenesis; lipopolysaccharide biosynthesis. The polypeptide is Succinyl-CoA:3-ketoacid coenzyme A transferase subunit A (lpsI) (Xanthomonas campestris pv. campestris (strain ATCC 33913 / DSM 3586 / NCPPB 528 / LMG 568 / P 25)).